An 85-amino-acid chain; its full sequence is Protein C4 (85 aa).

Gly-2 carries N-myristoyl glycine; by host lipidation. The disordered stretch occupies residues 42-65 (LNPAPTSTPTSTRTETLSNGENSR). Low complexity predominate over residues 44–59 (PAPTSTPTSTRTETLS).

This sequence belongs to the geminiviridae protein AC4/C4 family.

It is found in the host cell membrane. Pathogenicity determinant. May act as a suppressor of RNA-mediated gene silencing, also known as post-transcriptional gene silencing (PTGS), a mechanism of plant viral defense that limits the accumulation of viral RNAs. The protein is Protein C4 of Solanum lycopersicum (Tomato).